Reading from the N-terminus, the 451-residue chain is Tubulin alpha chain (451 aa).

Residue Gln11 coordinates GTP. Residue Lys40 is modified to N6-acetyllysine. Glu71, Gly144, Thr145, Thr179, Asn206, and Asn228 together coordinate GTP. Glu71 is a binding site for Mg(2+). Glu254 is a catalytic residue.

The protein belongs to the tubulin family. In terms of assembly, dimer of alpha and beta chains. A typical microtubule is a hollow water-filled tube with an outer diameter of 25 nm and an inner diameter of 15 nM. Alpha-beta heterodimers associate head-to-tail to form protofilaments running lengthwise along the microtubule wall with the beta-tubulin subunit facing the microtubule plus end conferring a structural polarity. Microtubules usually have 13 protofilaments but different protofilament numbers can be found in some organisms and specialized cells. Requires Mg(2+) as cofactor. Post-translationally, undergoes a tyrosination/detyrosination cycle, the cyclic removal and re-addition of a C-terminal tyrosine residue by the enzymes tubulin tyrosine carboxypeptidase (TTCP) and tubulin tyrosine ligase (TTL), respectively. Acetylation of alpha chains at Lys-40 stabilizes microtubules and affects affinity and processivity of microtubule motors. This modification has a role in multiple cellular functions, ranging from cell motility, cell cycle progression or cell differentiation to intracellular trafficking and signaling.

The protein localises to the cytoplasm. Its subcellular location is the cytoskeleton. It carries out the reaction GTP + H2O = GDP + phosphate + H(+). Its function is as follows. Tubulin is the major constituent of microtubules, a cylinder consisting of laterally associated linear protofilaments composed of alpha- and beta-tubulin heterodimers. Microtubules grow by the addition of GTP-tubulin dimers to the microtubule end, where a stabilizing cap forms. Below the cap, tubulin dimers are in GDP-bound state, owing to GTPase activity of alpha-tubulin. The protein is Tubulin alpha chain of Trypanosoma cruzi.